The sequence spans 262 residues: Glutamate racemase (262 aa).

Substrate is bound by residues 5–6 (DS) and 37–38 (YG). Residue C69 is the Proton donor/acceptor of the active site. A substrate-binding site is contributed by 70–71 (NT). C181 acts as the Proton donor/acceptor in catalysis. 182–183 (TH) lines the substrate pocket.

This sequence belongs to the aspartate/glutamate racemases family.

It catalyses the reaction L-glutamate = D-glutamate. The protein operates within cell wall biogenesis; peptidoglycan biosynthesis. Functionally, provides the (R)-glutamate required for cell wall biosynthesis. The sequence is that of Glutamate racemase from Buchnera aphidicola subsp. Acyrthosiphon pisum (strain 5A).